A 500-amino-acid polypeptide reads, in one-letter code: Glycerol kinase (500 aa).

T13 is an ADP binding site. ATP is bound by residues T13, T14, and S15. T13 lines the sn-glycerol 3-phosphate pocket. R17 lines the ADP pocket. Sn-glycerol 3-phosphate-binding residues include R83, E84, Y135, and D244. The glycerol site is built by R83, E84, Y135, D244, and Q245. ADP is bound by residues T266 and G309. The ATP site is built by T266, G309, Q313, and G410. Residues G410 and N414 each contribute to the ADP site.

It belongs to the FGGY kinase family.

The enzyme catalyses glycerol + ATP = sn-glycerol 3-phosphate + ADP + H(+). It functions in the pathway polyol metabolism; glycerol degradation via glycerol kinase pathway; sn-glycerol 3-phosphate from glycerol: step 1/1. With respect to regulation, inhibited by fructose 1,6-bisphosphate (FBP). In terms of biological role, key enzyme in the regulation of glycerol uptake and metabolism. Catalyzes the phosphorylation of glycerol to yield sn-glycerol 3-phosphate. In Burkholderia multivorans (strain ATCC 17616 / 249), this protein is Glycerol kinase.